A 947-amino-acid polypeptide reads, in one-letter code: Serine/threonine-protein kinase PKH2 (947 aa).

Positions 1–14 (MHKFRYSLHQHYSK) are enriched in basic residues. 3 disordered regions span residues 1 to 43 (MHKF…SSSS), 108 to 132 (SLGNTTNETGESIAKSAPGTPLSSH), and 162 to 212 (FNHL…NEEN). Positions 108–117 (SLGNTTNETG) are enriched in polar residues. Residues 187–198 (NTEEEENNDDTD) show a composition bias toward acidic residues. A compositionally biased stretch (basic and acidic residues) spans 199-212 (EIPKSETLKQNEEN). In terms of domain architecture, Protein kinase spans 240–502 (FKFGKELGEG…IPEIQKHYFF (263 aa)). ATP-binding positions include 250–252 (SYS) and K269. Residues 271–316 (LDKRHIIKEKKVKYVNIEKHALNRLSNRLGVISLYFTFQDKDSLYF) form a PIF-pocket region. ATP is bound by residues 319–321 (DYA) and E325. D364 serves as the catalytic Proton acceptor. Residues E368 and D382 each contribute to the ATP site. Composition is skewed to low complexity over residues 550 to 579 (VKKSTNSNSNTNNVATAVGGSSSNGHKGSS) and 618 to 632 (SSTSEDSSKRSSNSN). Disordered stretches follow at residues 550 to 598 (VKKS…STEK), 611 to 644 (KPATNQNSSTSEDSSKRSSNSNETRKLSYSQQDY), 660 to 686 (SVGSYVKTTPSKDRKTLTKVPSNIHQQ), and 794 to 816 (NMKRSPTSDSKKSMDIERSASTS). Residues 802 to 811 (DSKKSMDIER) show a composition bias toward basic and acidic residues.

The protein belongs to the protein kinase superfamily. AGC Ser/Thr protein kinase family. PDPK1 subfamily.

The protein localises to the nucleus. The protein resides in the cytoplasm. Its subcellular location is the cell cortex. The enzyme catalyses L-seryl-[protein] + ATP = O-phospho-L-seryl-[protein] + ADP + H(+). The catalysed reaction is L-threonyl-[protein] + ATP = O-phospho-L-threonyl-[protein] + ADP + H(+). Its function is as follows. Serine/threonine-protein kinase which is part sphingolipid-mediated signaling pathway that is required for the internalization step of endocytosis by regulating eisosome assembly and organization, and modulating the organization of the plasma membrane. Phosphorylates and activates PKC1. Activates YPK1 and YPK2, 2 components of signaling cascade required for maintenance of cell wall integrity. Required for stress-induced P-body assembly and regulates global mRNA decay at the deadenylation step. The chain is Serine/threonine-protein kinase PKH2 from Candida albicans (strain SC5314 / ATCC MYA-2876) (Yeast).